A 41-amino-acid chain; its full sequence is Large ribosomal subunit protein bL36 (41 aa).

The protein belongs to the bacterial ribosomal protein bL36 family.

The polypeptide is Large ribosomal subunit protein bL36 (Sinorhizobium fredii (strain NBRC 101917 / NGR234)).